The sequence spans 124 residues: Large ribosomal subunit protein bL19 (124 aa).

It belongs to the bacterial ribosomal protein bL19 family.

In terms of biological role, this protein is located at the 30S-50S ribosomal subunit interface and may play a role in the structure and function of the aminoacyl-tRNA binding site. This chain is Large ribosomal subunit protein bL19, found in Acidiphilium cryptum (strain JF-5).